The chain runs to 642 residues: Putative ATP-binding protein YdiF (642 aa).

2 ABC transporter domains span residues 4–259 (LQVN…EKDL) and 327–541 (LRVQ…ELEK). ATP contacts are provided by residues 36 to 43 (GRNGAGKS) and 360 to 367 (GPNGIGKS). Composition is skewed to basic and acidic residues over residues 541–550 (KMNQQEETDK) and 557–567 (SDSKRSYEEEK). A disordered region spans residues 541-567 (KMNQQEETDKTPATVKSDSKRSYEEEK).

It belongs to the ABC transporter superfamily. ABCF family. YdiF subfamily.

In Bacillus subtilis (strain 168), this protein is Putative ATP-binding protein YdiF (ydiF).